The following is an 843-amino-acid chain: Protein P (843 aa).

Residues 1 to 177 (MPLSYQHFRK…FCGSPYSWEQ (177 aa)) form a terminal protein domain (TP) region. The tract at residues 178–346 (DLQHGRLVFQ…YCLCHIVNLI (169 aa)) is spacer. The segment at 220–265 (QSRLGPQPAQGQLAGRQQGGSGSIRARVHPSPWGTVGVEPSGSGPT) is disordered. A compositionally biased stretch (low complexity) spans 223–235 (LGPQPAQGQLAGR). A polymerase/reverse transcriptase domain (RT) region spans residues 347–690 (EDWGPCTEHG…YLNLYPVARQ (344 aa)). Residues 357–600 (EHLIRTPRTP…YSLNFMGYVI (244 aa)) enclose the Reverse transcriptase domain. Mg(2+)-binding residues include Asp429, Asp551, and Asp552.

It belongs to the hepadnaviridae P protein family.

It carries out the reaction DNA(n) + a 2'-deoxyribonucleoside 5'-triphosphate = DNA(n+1) + diphosphate. It catalyses the reaction Endonucleolytic cleavage to 5'-phosphomonoester.. With respect to regulation, activated by host HSP70 and HSP40 in vitro to be able to bind the epsilon loop of the pgRNA. Because deletion of the RNase H region renders the protein partly chaperone-independent, the chaperones may be needed indirectly to relieve occlusion of the RNA-binding site by this domain. Inhibited by several reverse-transcriptase inhibitors: Lamivudine, Adefovir and Entecavir. Functionally, multifunctional enzyme that converts the viral RNA genome into dsDNA in viral cytoplasmic capsids. This enzyme displays a DNA polymerase activity that can copy either DNA or RNA templates, and a ribonuclease H (RNase H) activity that cleaves the RNA strand of RNA-DNA heteroduplexes in a partially processive 3'- to 5'-endonucleasic mode. Neo-synthesized pregenomic RNA (pgRNA) are encapsidated together with the P protein, and reverse-transcribed inside the nucleocapsid. Initiation of reverse-transcription occurs first by binding the epsilon loop on the pgRNA genome, and is initiated by protein priming, thereby the 5'-end of (-)DNA is covalently linked to P protein. Partial (+)DNA is synthesized from the (-)DNA template and generates the relaxed circular DNA (RC-DNA) genome. After budding and infection, the RC-DNA migrates in the nucleus, and is converted into a plasmid-like covalently closed circular DNA (cccDNA). The activity of P protein does not seem to be necessary for cccDNA generation, and is presumably released from (+)DNA by host nuclear DNA repair machinery. This is Protein P from Hepatitis B virus genotype B2 (isolate Vietnam/9873/1997) (HBV-B).